The sequence spans 464 residues: UDP-N-acetylmuramoylalanine--D-glutamate ligase (464 aa).

127 to 133 lines the ATP pocket; sequence GSNGKST.

Belongs to the MurCDEF family.

It is found in the cytoplasm. The catalysed reaction is UDP-N-acetyl-alpha-D-muramoyl-L-alanine + D-glutamate + ATP = UDP-N-acetyl-alpha-D-muramoyl-L-alanyl-D-glutamate + ADP + phosphate + H(+). It functions in the pathway cell wall biogenesis; peptidoglycan biosynthesis. Its function is as follows. Cell wall formation. Catalyzes the addition of glutamate to the nucleotide precursor UDP-N-acetylmuramoyl-L-alanine (UMA). This chain is UDP-N-acetylmuramoylalanine--D-glutamate ligase, found in Roseobacter denitrificans (strain ATCC 33942 / OCh 114) (Erythrobacter sp. (strain OCh 114)).